The sequence spans 317 residues: Methionyl-tRNA formyltransferase (317 aa).

110 to 113 (SLLP) lines the (6S)-5,6,7,8-tetrahydrofolate pocket.

It belongs to the Fmt family.

It catalyses the reaction L-methionyl-tRNA(fMet) + (6R)-10-formyltetrahydrofolate = N-formyl-L-methionyl-tRNA(fMet) + (6S)-5,6,7,8-tetrahydrofolate + H(+). Attaches a formyl group to the free amino group of methionyl-tRNA(fMet). The formyl group appears to play a dual role in the initiator identity of N-formylmethionyl-tRNA by promoting its recognition by IF2 and preventing the misappropriation of this tRNA by the elongation apparatus. The sequence is that of Methionyl-tRNA formyltransferase from Bacillus subtilis (strain 168).